A 309-amino-acid chain; its full sequence is Protein FdhE homolog (309 aa).

Belongs to the FdhE family.

Its subcellular location is the cytoplasm. Functionally, necessary for formate dehydrogenase activity. The polypeptide is Protein FdhE homolog (Klebsiella pneumoniae (strain 342)).